A 343-amino-acid polypeptide reads, in one-letter code: Phosphate acyltransferase (343 aa).

Belongs to the PlsX family. As to quaternary structure, homodimer. Probably interacts with PlsY.

It is found in the cytoplasm. The enzyme catalyses a fatty acyl-[ACP] + phosphate = an acyl phosphate + holo-[ACP]. It participates in lipid metabolism; phospholipid metabolism. Functionally, catalyzes the reversible formation of acyl-phosphate (acyl-PO(4)) from acyl-[acyl-carrier-protein] (acyl-ACP). This enzyme utilizes acyl-ACP as fatty acyl donor, but not acyl-CoA. The polypeptide is Phosphate acyltransferase (Limosilactobacillus reuteri (strain DSM 20016) (Lactobacillus reuteri)).